A 636-amino-acid chain; its full sequence is Poly(3-hydroxyalkanoate) polymerase subunit PhaC (636 aa).

2 disordered regions span residues 1-38 and 129-152; these read MYNK…DATD and QGTR…KRFS. Positions 143-152 are enriched in basic and acidic residues; it reads PDTRKDKRFS. Cysteine 373 is a catalytic residue.

The protein belongs to the PHA/PHB synthase family. Type I PhaC subfamily.

It is found in the cytoplasm. The catalysed reaction is (3R)-3-hydroxybutanoyl-CoA + [(3R)-hydroxybutanoate](n) = [(3R)-hydroxybutanoate](n+1) + CoA. It functions in the pathway biopolymer metabolism; poly-(R)-3-hydroxybutanoate biosynthesis. Its function is as follows. Polymerizes D(-)-3-hydroxybutyryl-CoA to create PHB which consists of thousands of hydroxybutyrate molecules linked end to end. PHB serves as an intracellular energy reserve material when cells grow under conditions of nutrient limitation. This chain is Poly(3-hydroxyalkanoate) polymerase subunit PhaC, found in Rhizobium etli (strain ATCC 51251 / DSM 11541 / JCM 21823 / NBRC 15573 / CFN 42).